A 506-amino-acid chain; its full sequence is MEEYQVYLELDRSRQQDFLYPLIFREYIYGLAYGHDLNRSILVENVGYDNKSSLLIVKRLITRMYQQNHLIISANDSNKNPFWGYNKNLYSQIISEGFAVVVEIPFSLQLSSSLEEAEIVKSYKNLRSIHSIFPFFEDQFTYLNYVSDVRIPYPIHLEILVQTLRYWVKDAPFFHLLRLFIYEYCNWNSLITPKKYISTFSKRNTRFFLFLYNFYVCEYESILLFLRNKSAHLRLTSFSVLFERIYFYAKIEHLVEVFAKDFSSTLSFFKDPFIHYVRYQGKSILASKNAPLLMNKWKYYLIHLWQYHFYVWSQPGTIHINQLSEHSFHFLGYFSNVRINLSAVRSQMLENSFIIEIGMKKLDTIVPIIPLIRSLAKAKFCNVLGHPISKPVWAYSSDFYIIDRFLRICRNLSHYYNGSSKKKSLYQIKYILRLSCIKTLARKHKSTVRAFLKRLGSEEFLEEFFTEEEEILSLIFPRASSTLQRLYRGRIWYLDIIFINDLVNHE.

Belongs to the intron maturase 2 family. MatK subfamily.

It is found in the plastid. The protein resides in the chloroplast. In terms of biological role, usually encoded in the trnK tRNA gene intron. Probably assists in splicing its own and other chloroplast group II introns. The polypeptide is Maturase K (Styphnolobium japonicum (Japanese pagoda tree)).